We begin with the raw amino-acid sequence, 551 residues long: Colicin-E6 (551 aa).

5 disordered regions span residues 1-74, 244-269, 293-317, 406-501, and 517-551; these read MSGG…SGGG, LSPG…NTRD, PDQV…HPVE, NKQA…WYGD, and EGYR…KKYL. Gly residues predominate over residues 20 to 35; it reads INGGPTGLGVGGGASD. Positions 36-45 are enriched in low complexity; that stretch reads GSGWSSENNP. Residues 46-74 show a composition bias toward gly residues; sequence WGGGSGSGIHWGGGSGHGNGGGNGNSGGG. Composition is skewed to basic and acidic residues over residues 296 to 317 and 430 to 484; these read VKQR…HPVE and ESRK…EGKP. The segment at 455–551 is ribosome inactivating activity; it reads KGVKDYGHDY…DPKRNIKKYL (97 aa). The interval 530–551 is binding of immunity protein; that stretch reads FEPKTGNQLKGPDPKRNIKKYL.

This sequence belongs to the cloacin colicin family.

Its function is as follows. Inactivates ribosomes by hydrolyzing 16S RNA in 30S ribosomes at a specific site. In terms of biological role, colicins are polypeptide toxins produced by and active against E.coli and closely related bacteria. This chain is Colicin-E6, found in Escherichia coli.